A 346-amino-acid chain; its full sequence is Putative alpha/beta hydrolase R526 (346 aa).

The protein belongs to the AB hydrolase 3 family.

The protein localises to the virion. This Acanthamoeba polyphaga mimivirus (APMV) protein is Putative alpha/beta hydrolase R526.